The primary structure comprises 510 residues: NAD(P)H-quinone oxidoreductase subunit 2 B, chloroplastic (510 aa).

13 helical membrane passes run 24–44 (LLLF…GLIL), 57–77 (IPWL…ALLF), 99–119 (IFQF…VEYI), 124–144 (MAIA…MFLC), 149–169 (LITI…LSGY), 183–203 (YLLM…WLYG), 227–247 (PGIS…LSPA), 295–315 (WHLL…LIAI), 323–343 (MLAY…IVGD), 354–374 (YMLF…LFGL), 395–415 (ALSL…AGFF), 418–438 (LHLF…IGLL), and 484–504 (MIVC…IIAI).

It belongs to the complex I subunit 2 family. In terms of assembly, NDH is composed of at least 16 different subunits, 5 of which are encoded in the nucleus.

Its subcellular location is the plastid. The protein localises to the chloroplast thylakoid membrane. It carries out the reaction a plastoquinone + NADH + (n+1) H(+)(in) = a plastoquinol + NAD(+) + n H(+)(out). The enzyme catalyses a plastoquinone + NADPH + (n+1) H(+)(in) = a plastoquinol + NADP(+) + n H(+)(out). Its function is as follows. NDH shuttles electrons from NAD(P)H:plastoquinone, via FMN and iron-sulfur (Fe-S) centers, to quinones in the photosynthetic chain and possibly in a chloroplast respiratory chain. The immediate electron acceptor for the enzyme in this species is believed to be plastoquinone. Couples the redox reaction to proton translocation, and thus conserves the redox energy in a proton gradient. This Gossypium hirsutum (Upland cotton) protein is NAD(P)H-quinone oxidoreductase subunit 2 B, chloroplastic.